The sequence spans 214 residues: uncharacterized protein (214 aa).

A helical transmembrane segment spans residues 9-31; that stretch reads FLYFAISVLVNLLFLKILYIYLF. The tract at residues 53 to 74 is disordered; that stretch reads APPKKPGKPQKKVVKKKPEAVS. Residues 54–67 are compositionally biased toward basic residues; that stretch reads PPKKPGKPQKKVVK.

Its subcellular location is the membrane. This is an uncharacterized protein from Aquifex aeolicus (strain VF5).